The primary structure comprises 61 residues: Small ribosomal subunit protein uS14 (61 aa).

Residues Cys24, Cys27, Cys40, and Cys43 each coordinate Zn(2+).

The protein belongs to the universal ribosomal protein uS14 family. Zinc-binding uS14 subfamily. As to quaternary structure, part of the 30S ribosomal subunit. Contacts proteins S3 and S10. Zn(2+) is required as a cofactor.

In terms of biological role, binds 16S rRNA, required for the assembly of 30S particles and may also be responsible for determining the conformation of the 16S rRNA at the A site. The polypeptide is Small ribosomal subunit protein uS14 (Geobacter metallireducens (strain ATCC 53774 / DSM 7210 / GS-15)).